The sequence spans 528 residues: PH domain-containing protein DDB_G0267786 (528 aa).

A PH domain is found at 59–180; the sequence is SDVFSGYLVK…WIEIFKTCCR (122 aa).

The protein is PH domain-containing protein DDB_G0267786 of Dictyostelium discoideum (Social amoeba).